We begin with the raw amino-acid sequence, 629 residues long: Carboxypeptidase Y homolog ARB_06361 (629 aa).

Positions 1 to 18 (MLITWLLDVLLLAPPVAA) are cleaved as a signal peptide. N-linked (GlcNAc...) asparagine glycosylation is found at Asn157 and Asn197. Ser235 is an active-site residue. An intrachain disulfide couples Cys326 to Cys355. Residues Asn405 and Asn418 are each glycosylated (N-linked (GlcNAc...) asparagine). Residue Asp453 is part of the active site. Cys456 serves as a coordination point for substrate. N-linked (GlcNAc...) asparagine glycosylation is found at Asn463 and Asn554.

This sequence belongs to the peptidase S10 family.

It localises to the secreted. It carries out the reaction Release of a C-terminal amino acid with broad specificity.. Its function is as follows. Involved in degradation of small peptides. The sequence is that of Carboxypeptidase Y homolog ARB_06361 from Arthroderma benhamiae (strain ATCC MYA-4681 / CBS 112371) (Trichophyton mentagrophytes).